A 364-amino-acid chain; its full sequence is PqqA peptide cyclase (364 aa).

One can recognise a Radical SAM core domain in the interval 6 to 222 (VGAPAGMLIE…HARTRYAGGP (217 aa)). Cys-20, Cys-24, and Cys-27 together coordinate [4Fe-4S] cluster.

This sequence belongs to the radical SAM superfamily. PqqE family. Interacts with PqqD. The interaction is necessary for activity of PqqE. It depends on [4Fe-4S] cluster as a cofactor.

The enzyme catalyses [PQQ precursor protein] + S-adenosyl-L-methionine = E-Y cross-linked-[PQQ precursor protein] + 5'-deoxyadenosine + L-methionine + H(+). It participates in cofactor biosynthesis; pyrroloquinoline quinone biosynthesis. Functionally, catalyzes the cross-linking of a glutamate residue and a tyrosine residue in the PqqA protein as part of the biosynthesis of pyrroloquinoline quinone (PQQ). This Streptomyces rochei (Streptomyces parvullus) protein is PqqA peptide cyclase.